Reading from the N-terminus, the 96-residue chain is Co-chaperonin GroES (96 aa).

This sequence belongs to the GroES chaperonin family. Heptamer of 7 subunits arranged in a ring. Interacts with the chaperonin GroEL.

The protein localises to the cytoplasm. In terms of biological role, together with the chaperonin GroEL, plays an essential role in assisting protein folding. The GroEL-GroES system forms a nano-cage that allows encapsulation of the non-native substrate proteins and provides a physical environment optimized to promote and accelerate protein folding. GroES binds to the apical surface of the GroEL ring, thereby capping the opening of the GroEL channel. This Polaromonas naphthalenivorans (strain CJ2) protein is Co-chaperonin GroES.